The chain runs to 377 residues: Flagellin C (377 aa).

2 coiled-coil regions span residues 103 to 129 (SNSKADRVAIQEEITALNDELNRIAET) and 301 to 340 (VDSHRAQLGAFQNRFNHAINNLDNINENVNASKSRIKDTD).

The protein belongs to the bacterial flagellin family. In terms of assembly, heteromer of multiple flagellin subunits including FlaA, FlaB, FlaC, FlaD and possibly FlaE.

Its subcellular location is the secreted. The protein localises to the bacterial flagellum. Functionally, flagellin is the subunit protein which polymerizes to form the filaments of bacterial flagella. FlaC is not essential for flagellar synthesis and motility. This is Flagellin C (flaC) from Vibrio anguillarum (Listonella anguillarum).